Here is a 236-residue protein sequence, read N- to C-terminus: Small ribosomal subunit protein uS2c (236 aa).

This sequence belongs to the universal ribosomal protein uS2 family.

It localises to the plastid. Its subcellular location is the chloroplast. This chain is Small ribosomal subunit protein uS2c (rps2), found in Oryza nivara (Indian wild rice).